The following is a 298-amino-acid chain: DDRGK domain-containing protein 1 (298 aa).

Residues 1 to 21 (MDIVLYFVAVPILIVLIVSAV) traverse the membrane as a helical segment. At 22–298 (KVRGKTEEDN…NLIPEIHNTA (277 aa)) the chain is on the cytoplasmic side. The segment at 71–149 (NSAYREAADN…EERRKEDKKE (79 aa)) is disordered. Over residues 82–94 (SPVEVEEEYEEAE) the composition is skewed to acidic residues. A compositionally biased stretch (basic and acidic residues) spans 110–149 (KLEEKQAKRAQREAELEEREERKRTQELREEERRKEDKKE). The UFM1-interacting motif (UFIM) signature appears at 181-195 (SFVVEEQGEADELTE). A PCI domain is found at 215–259 (VLLEDLASHFGLRTQDAISRLQDLLSDGSITGVIDDRGKFIFITP).

This sequence belongs to the DDRGK1 family. In terms of assembly, component of the UFM1 ribosome E3 ligase (UREL) complex, composed of ufl1, ddrgk1 and cdk5rap3.

It localises to the endoplasmic reticulum membrane. Functionally, component of the UFM1 ribosome E3 ligase (UREL) complex, a multiprotein complex that catalyzes ufmylation of endoplasmic reticulum-docked proteins. The UREL complex plays a key role in ribosome recycling by mediating mono-ufmylation of the RPL26/uL24 subunit of the 60S ribosome following ribosome dissociation: ufmylation weakens the junction between post-termination 60S subunits and SEC61 translocons, promoting release and recycling of the large ribosomal subunit from the endoplasmic reticulum membrane. Ufmylation of RPL26/uL24 and subsequent 60S ribosome recycling either take place after normal termination of translation or after ribosome stalling during cotranslational translocation at the endoplasmic reticulum. Within the UREL complex, DDRGK1 tethers the complex to the endoplasmic reticulum membrane to restrict its activity to endoplasmic reticulum-docked ribosomes and acts as an ufmylation 'reader': following RPL26/uL24 ufmylation, DDRGK1 specifically binds to ufmylated RPL26/uL24 via its UFIM motif, resulting in stable association between the 60S ribosome and the UREL complex, followed by dissociation of the 60S ribosome subunit from the endoplasmic reticulum membrane. The UREL complex is also involved in reticulophagy in response to endoplasmic reticulum stress by promoting ufmylation of proteins such as CYB5R3 and RPN1, thereby promoting lysosomal degradation of ufmylated proteins. Required for stabilization and ufmylation of ATG9A. This is DDRGK domain-containing protein 1 from Osmerus mordax (Rainbow smelt).